The following is a 264-amino-acid chain: Synaptophysin-like protein 2 (264 aa).

Residues 1–33 (MSSTESPGRTSDKSPRQQVDRLLLGLRWQRLEE) lie on the Cytoplasmic side of the membrane. Positions 30–238 (RLEEPLGFIK…NCWFVFKETP (209 aa)) constitute an MARVEL domain. The helical transmembrane segment at 34 to 54 (PLGFIKVLQWLFAIFAFGSCG) threads the bilayer. Topologically, residues 55–116 (SYSGETGALV…LMGDFSAPAE (62 aa)) are vesicular. The helical transmembrane segment at 117-137 (FFVTLGIFSFFYTMAALVIYL) threads the bilayer. Over 138–150 (RFHKLYTENKRFP) the chain is Cytoplasmic. Residues 151–171 (LVDFCVTVSFTFFWLVAAAAW) form a helical membrane-spanning segment. The Vesicular segment spans residues 172-213 (GKGLTDVKGATRPSSLTAAMSVCHGEEAVCSAGATPSMGLAN). Asparagine 213 is a glycosylation site (N-linked (GlcNAc...) asparagine). A helical transmembrane segment spans residues 214-234 (LSVLFGFINFFLWAGNCWFVF). Residues 235-264 (KETPWHGQGQDQGQGPSQESAAEQGAVEKQ) are Cytoplasmic-facing. The interval 242 to 264 (QGQDQGQGPSQESAAEQGAVEKQ) is disordered.

Belongs to the synaptophysin/synaptobrevin family. In terms of tissue distribution, expressed abundantly in skeletal muscle and at lower levels in the kidney.

Its subcellular location is the membrane. Functionally, involved in communication between the T-tubular and junctional sarcoplasmic reticulum (SR) membranes. This Mus musculus (Mouse) protein is Synaptophysin-like protein 2 (Sypl2).